The sequence spans 443 residues: ATP-dependent protease ATPase subunit HslU (443 aa).

Residues Ile-18, 60–65 (GVGKTE), Asp-256, Glu-321, and Arg-393 each bind ATP.

Belongs to the ClpX chaperone family. HslU subfamily. In terms of assembly, a double ring-shaped homohexamer of HslV is capped on each side by a ring-shaped HslU homohexamer. The assembly of the HslU/HslV complex is dependent on binding of ATP.

The protein localises to the cytoplasm. Functionally, ATPase subunit of a proteasome-like degradation complex; this subunit has chaperone activity. The binding of ATP and its subsequent hydrolysis by HslU are essential for unfolding of protein substrates subsequently hydrolyzed by HslV. HslU recognizes the N-terminal part of its protein substrates and unfolds these before they are guided to HslV for hydrolysis. This Shigella dysenteriae serotype 1 (strain Sd197) protein is ATP-dependent protease ATPase subunit HslU.